Reading from the N-terminus, the 1013-residue chain is Polyprotein of EF-Ts, chloroplastic (1013 aa).

The transit peptide at 1–43 (MLRELGRTATVKAHGRSVLRPVRGPAGRRQVAFTGVRPSVRVF) directs the protein to the chloroplast. The region spanning 64 to 133 (GSEYEGTVTT…EKKRVSLELK (70 aa)) is the S1 motif 1 domain. A compositionally biased stretch (acidic residues) spans 141–150 (SAEESDDIIT). The tract at residues 141–163 (SAEESDDIITEPDREGADATDDD) is disordered. Positions 227–331 (MEEVTGKVAR…DGRGISLTHF (105 aa)) constitute an S1 motif 2 domain. Positions 772-798 (QAKAAAPAAPKKEEPKKEEPKKATVAV) are disordered. The span at 781 to 793 (PKKEEPKKEEPKK) shows a compositional bias: basic and acidic residues.

This sequence belongs to the EF-Ts family. As to quaternary structure, component of the chloroplast ribosome 30S and 70S subunits, as well as polysomes. In terms of assembly, component of the chloroplast ribosome 70S subunit, and at low levels, present in polysomes. Associates transiently with chloroplast polysomes.

Its subcellular location is the plastid. It is found in the chloroplast. In terms of biological role, associates with the EF-Tu.GDP complex and induces the exchange of GDP to GTP. It remains bound to the aminoacyl-tRNA.EF-Tu.GTP complex up to the GTP hydrolysis stage on the ribosome. Binds to psbD and psbA mRNAs 5'-untranslated regions (UTRs) in vitro. This is Polyprotein of EF-Ts, chloroplastic from Chlamydomonas reinhardtii (Chlamydomonas smithii).